A 444-amino-acid polypeptide reads, in one-letter code: Protein cereblon (444 aa).

Positions 1–52 (MAGEGDPEDAAHNMGNHLPLLPAEEEEEDEIEMEVEDQDNKEPKKPNIINFD) are disordered. The span at 23-37 (AEEEEEDEIEMEVED) shows a compositional bias: acidic residues. Positions 80–321 (CPVIPVLPQV…CELDIMNKCT (242 aa)) constitute a Lon N-terminal domain. Residues 320 to 428 (CTSLCCKQCQ…LTRSALLPTI (109 aa)) enclose the CULT domain. 2 residues coordinate Zn(2+): C325 and C328. The (S)-thalidomide site is built by H380, W382, and W388. Zn(2+) is bound by residues C393 and C396.

This sequence belongs to the CRBN family. In terms of assembly, component of a DCX (DDB1-CUL4-X-box) protein ligase complex, at least composed of CRBN, CUL4A, DDB1 and RBX1. Interacts directly with DDB1. Interacts with KCNT1. Interacts with ILF2. Interacts with TRAF6 and ECSIT. In terms of processing, ubiquitinated, ubiquitination is mediated by its own DCX protein ligase complex.

The protein resides in the cytoplasm. Its subcellular location is the nucleus. The protein localises to the membrane. It functions in the pathway protein modification; protein ubiquitination. Its function is as follows. Substrate recognition component of a DCX (DDB1-CUL4-X-box) E3 protein ligase complex that mediates the ubiquitination and subsequent proteasomal degradation of target proteins, such as MEIS2, ILF2 or GLUL. Normal degradation of key regulatory proteins is required for normal limb outgrowth and expression of the fibroblast growth factor FGF8. Maintains presynaptic glutamate release and consequently cognitive functions, such as memory and learning, by negatively regulating large-conductance calcium-activated potassium (BK) channels in excitatory neurons. Likely to function by regulating the assembly and neuronal surface expression of BK channels via its interaction with KCNT1. May also be involved in regulating anxiety-like behaviors via a BK channel-independent mechanism. Plays a negative role in TLR4 signaling by interacting with TRAF6 and ECSIT, leading to inhibition of ECSIT ubiquitination, an important step of the signaling. In Bos taurus (Bovine), this protein is Protein cereblon (CRBN).